Reading from the N-terminus, the 435-residue chain is U-box domain-containing protein 21 (435 aa).

The U-box domain occupies 30–104 (TIPPEFQCPI…QGWCVEKGSP (75 aa)). 4 ARM repeats span residues 202-241 (LEGISKLASATSFRCVAGLLKSTDDSVRQNAAFIMKEILS), 245-285 (TRVH…QMVL), 288-327 (PEIASEFLEIGLVSITVEMIVDAENSVCEKALAVLDAICE), and 329-369 (EHGR…KLWK).

The catalysed reaction is S-ubiquitinyl-[E2 ubiquitin-conjugating enzyme]-L-cysteine + [acceptor protein]-L-lysine = [E2 ubiquitin-conjugating enzyme]-L-cysteine + N(6)-ubiquitinyl-[acceptor protein]-L-lysine.. It participates in protein modification; protein ubiquitination. Functionally, functions as an E3 ubiquitin ligase. In Arabidopsis thaliana (Mouse-ear cress), this protein is U-box domain-containing protein 21 (PUB21).